The following is a 298-amino-acid chain: 3-sulfolactaldehyde reductase (298 aa).

Residues glutamine 11–methionine 12, aspartate 31, leucine 65, and threonine 96 contribute to the NAD(+) site. Arginine 123 is a 2,3-dihydroxypropane-1-sulfonate binding site. The active site involves lysine 171. Position 174 to 178 (asparagine 174 to serine 178) interacts with 2,3-dihydroxypropane-1-sulfonate. Lysine 240 contacts NAD(+).

This sequence belongs to the HIBADH-related family. 3-sulfolactaldehyde reductase subfamily. Homotetramer. Dimer of dimers.

It carries out the reaction (2S)-3-sulfopropanediol + NAD(+) = (2S)-3-sulfolactaldehyde + NADH + H(+). The enzyme catalyses 4-hydroxybutanoate + NAD(+) = succinate semialdehyde + NADH + H(+). With respect to regulation, inhibited by the NADH analogs tetrahydro-NADH and hexahydro-NADH. In terms of biological role, reduces 3-sulfolactaldehyde (SLA) to 2,3-dihydroxypropane 1-sulfonate (DHPS). Metabolite profiling studies showed that the enzyme also catalyzes in vitro the NADH-dependent reduction of succinic semialdehyde (SSA) to 4-hydroxybutyrate (GHB), and that it could be involved in the metabolism of SSA, and other potentially toxic intermediates that may accumulate under stress conditions. However, the enzyme exhibits a 42,000-fold greater catalytic efficiency for the reduction of SLA over SSA. Shows no detectable activity on the analogous glycolytic intermediate glyceraldehyde-3-phosphate. The protein is 3-sulfolactaldehyde reductase (yihU) of Escherichia coli (strain K12).